Here is a 398-residue protein sequence, read N- to C-terminus: Cap-specific mRNA (nucleoside-2'-O-)-methyltransferase 1 (398 aa).

One can recognise a RrmJ-type SAM-dependent 2'-O-MTase domain in the interval 85–298; the sequence is QFSNRAGHKL…ERYLVCVDFL (214 aa). 2 residues coordinate S-adenosyl-L-methionine: Gly132 and Asp211. Lys252 (proton acceptor) is an active-site residue. A disordered region spans residues 371–398; that stretch reads LKAKETTTRTSAESDDSPLSSRESCKDG.

It carries out the reaction a 5'-end (N(7)-methyl 5'-triphosphoguanosine)-ribonucleoside in mRNA + S-adenosyl-L-methionine = a 5'-end (N(7)-methyl 5'-triphosphoguanosine)-(2'-O-methyl-ribonucleoside) in mRNA + S-adenosyl-L-homocysteine + H(+). S-adenosyl-L-methionine-dependent methyltransferase that mediates RNA cap1 2'-O-ribose methylation to the 5'-cap structure of RNAs. Methylates the ribose of the first nucleotide of a m(7)GpppG-capped mRNA to produce m(7)GpppNmp (cap1). The protein is Cap-specific mRNA (nucleoside-2'-O-)-methyltransferase 1 of Leishmania braziliensis.